The following is a 192-amino-acid chain: Ion-translocating oxidoreductase complex subunit A (192 aa).

6 helical membrane passes run Leu5–Leu25, Ile39–Val59, Leu65–Val85, Ala102–Leu122, Ala134–Met154, and Ala171–Val191.

It belongs to the NqrDE/RnfAE family. The complex is composed of six subunits: RnfA, RnfB, RnfC, RnfD, RnfE and RnfG.

Its subcellular location is the cell inner membrane. Part of a membrane-bound complex that couples electron transfer with translocation of ions across the membrane. The chain is Ion-translocating oxidoreductase complex subunit A from Shewanella putrefaciens (strain CN-32 / ATCC BAA-453).